We begin with the raw amino-acid sequence, 413 residues long: Serine hydroxymethyltransferase (413 aa).

(6S)-5,6,7,8-tetrahydrofolate is bound by residues Leu119 and 123-125; that span reads GHL. Lys228 bears the N6-(pyridoxal phosphate)lysine mark. A (6S)-5,6,7,8-tetrahydrofolate-binding site is contributed by 351–353; that stretch reads SPF.

This sequence belongs to the SHMT family. Homodimer. The cofactor is pyridoxal 5'-phosphate.

The protein resides in the cytoplasm. The catalysed reaction is (6R)-5,10-methylene-5,6,7,8-tetrahydrofolate + glycine + H2O = (6S)-5,6,7,8-tetrahydrofolate + L-serine. It functions in the pathway one-carbon metabolism; tetrahydrofolate interconversion. Its pathway is amino-acid biosynthesis; glycine biosynthesis; glycine from L-serine: step 1/1. Its function is as follows. Catalyzes the reversible interconversion of serine and glycine with tetrahydrofolate (THF) serving as the one-carbon carrier. This reaction serves as the major source of one-carbon groups required for the biosynthesis of purines, thymidylate, methionine, and other important biomolecules. Also exhibits THF-independent aldolase activity toward beta-hydroxyamino acids, producing glycine and aldehydes, via a retro-aldol mechanism. The chain is Serine hydroxymethyltransferase from Clostridium botulinum (strain Langeland / NCTC 10281 / Type F).